Here is a 630-residue protein sequence, read N- to C-terminus: Chaperone protein HtpG (630 aa).

Residues Met-1–Arg-338 form an a; substrate-binding region. The tract at residues Glu-339–Lys-555 is b. The c stretch occupies residues Ile-556 to Asn-630.

This sequence belongs to the heat shock protein 90 family. Homodimer.

The protein resides in the cytoplasm. Its function is as follows. Molecular chaperone. Has ATPase activity. In Marinobacter nauticus (strain ATCC 700491 / DSM 11845 / VT8) (Marinobacter aquaeolei), this protein is Chaperone protein HtpG.